The chain runs to 501 residues: Glycogen synthase 1 (501 aa).

Position 18 (lysine 18) interacts with ADP-alpha-D-glucose.

It belongs to the glycosyltransferase 1 family. Bacterial/plant glycogen synthase subfamily.

The catalysed reaction is [(1-&gt;4)-alpha-D-glucosyl](n) + ADP-alpha-D-glucose = [(1-&gt;4)-alpha-D-glucosyl](n+1) + ADP + H(+). The protein operates within glycan biosynthesis; glycogen biosynthesis. In terms of biological role, synthesizes alpha-1,4-glucan chains using ADP-glucose. The chain is Glycogen synthase 1 from Geobacter sulfurreducens (strain ATCC 51573 / DSM 12127 / PCA).